The following is a 291-amino-acid chain: Serine hydrolase BPHL (291 aa).

Positions 1 to 37 (MVAVLGGRGVLRLRLLLSALKPGIHVPRAGPAAAFGT) are cleaved as a signal peptide. Residues 62 to 181 (AVLLLPGMLG…DSMIYEGIRD (120 aa)) form the AB hydrolase-1 domain. Residues lysine 86 and lysine 119 each carry the N6-acetyllysine modification. Lysine 126 carries the N6-acetyllysine; alternate modification. Lysine 126 is modified (N6-succinyllysine; alternate). Serine 139 serves as the catalytic Nucleophile. Lysine 184 is subject to N6-succinyllysine. Lysine 191 carries the post-translational modification N6-acetyllysine; alternate. The residue at position 191 (lysine 191) is an N6-succinyllysine; alternate. The residue at position 217 (lysine 217) is an N6-acetyllysine. Aspartate 221 contributes to the Mg(2+) binding site. Position 243 is an N6-acetyllysine (lysine 243). Catalysis depends on aspartate 244, which acts as the Charge relay system. 2 positions are modified to N6-acetyllysine; alternate: lysine 260 and lysine 271. 2 positions are modified to N6-succinyllysine; alternate: lysine 260 and lysine 271. The active-site Charge relay system is the histidine 272.

This sequence belongs to the AB hydrolase superfamily. Lipase family. As to quaternary structure, monomer. May also form homodimers. As to expression, expressed at high levels in liver and kidney and lower levels in heart, intestine and skeletal muscle.

It is found in the mitochondrion. The catalysed reaction is L-homocysteine thiolactone + H2O = L-homocysteine + H(+). The enzyme catalyses valacyclovir + H2O = acyclovir + L-valine + H(+). Its function is as follows. Specific alpha-amino acid ester serine hydrolase that prefers small, hydrophobic, and aromatic side chains and does not have a stringent requirement for the leaving group other than preferring a primary alcohol. Has homocysteine-thiolactonase activity (in vitro) and may play a significant role in the detoxification of homocysteine thiolactone in vivo. Catalyzes the hydrolytic activation of amino acid ester prodrugs of nucleoside analogs such as valacyclovir and valganciclovir, converting them into their active forms (acyclovir and ganciclovir). The polypeptide is Serine hydrolase BPHL (BPHL) (Homo sapiens (Human)).